Here is a 370-residue protein sequence, read N- to C-terminus: Glutamate 5-kinase (370 aa).

K12 contacts ATP. Residues S52, D139, and N151 each coordinate substrate. ATP contacts are provided by residues 171 to 172 and 213 to 219; these read SD and TGGMFTK. The 79-residue stretch at 278–356 folds into the PUA domain; sequence QAHIAVDAGA…SDIESILGYS (79 aa).

Belongs to the glutamate 5-kinase family.

The protein resides in the cytoplasm. The catalysed reaction is L-glutamate + ATP = L-glutamyl 5-phosphate + ADP. The protein operates within amino-acid biosynthesis; L-proline biosynthesis; L-glutamate 5-semialdehyde from L-glutamate: step 1/2. In terms of biological role, catalyzes the transfer of a phosphate group to glutamate to form L-glutamate 5-phosphate. The polypeptide is Glutamate 5-kinase (Herpetosiphon aurantiacus (strain ATCC 23779 / DSM 785 / 114-95)).